A 233-amino-acid polypeptide reads, in one-letter code: uncharacterized protein (233 aa).

3 helical membrane-spanning segments follow: residues 4-24 (LAIL…NHDT), 35-55 (FGQL…ILQS), and 66-86 (IAIW…RFEL).

It localises to the cell membrane. This is an uncharacterized protein from Sinorhizobium sp.